An 854-amino-acid chain; its full sequence is Protein SEY1 homolog (854 aa).

Residues 1 to 724 lie on the Cytoplasmic side of the membrane; that stretch reads MAAFSGETAV…LRNIESGKQS (724 aa). Residues 49-291 form the GB1/RHD3-type G domain; it reads GVNYHVVGVF…NSNFLFSNCS (243 aa). Residue 59–66 participates in GTP binding; sequence GGQSSGKS. Positions 336–386 form a coiled coil; that stretch reads KHAAIEEFKEVCEEYTKKIQRGDVIPQFTRALEETIERLLKNFSDQTKLYK. A helical transmembrane segment spans residues 725 to 745; it reads LPPWVLPVMLLLGWNELYYLL. Residues 746–748 are Lumenal-facing; it reads TSP. Residues 749–769 traverse the membrane as a helical segment; it reads ILLIAIIVIAVLFFKTFLKSQ. The Cytoplasmic portion of the chain corresponds to 770–854; it reads LEVLEEKCPV…CRESRDKGED (85 aa). The tract at residues 808–854 is disordered; the sequence is GGGGAQFRDPTQATSVSGASAGVSSESSSAASPRRRVCRESRDKGED. Residues 822-839 are compositionally biased toward low complexity; that stretch reads SVSGASAGVSSESSSAAS. Over residues 845–854 the composition is skewed to basic and acidic residues; that stretch reads CRESRDKGED.

Belongs to the TRAFAC class dynamin-like GTPase superfamily. GB1/RHD3 GTPase family. RHD3 subfamily.

Its subcellular location is the endoplasmic reticulum membrane. Functionally, probable GTP-binding protein that may be involved in cell development. This Trypanosoma brucei brucei (strain 927/4 GUTat10.1) protein is Protein SEY1 homolog.